The sequence spans 42 residues: Large ribosomal subunit protein eL32 (42 aa).

The protein belongs to the eukaryotic ribosomal protein eL32 family.

This chain is Large ribosomal subunit protein eL32 (RPL32), found in Zea mays (Maize).